The sequence spans 381 residues: Phenylalanine dehydrogenase (381 aa).

Arg55 contributes to the NAD(+) binding site. Lys79 serves as a coordination point for L-phenylalanine. The active site involves Lys91. NAD(+) is bound by residues Asp126, Ser157, Thr161, 191 to 197 (GLGKVGY), 214 to 215 (DI), 254 to 255 (AM), and 275 to 277 (SAN). L-phenylalanine is bound at residue Asn277.

This sequence belongs to the Glu/Leu/Phe/Val dehydrogenases family.

The catalysed reaction is L-phenylalanine + NAD(+) + H2O = 3-phenylpyruvate + NH4(+) + NADH + H(+). It participates in amino-acid biosynthesis; L-phenylalanine biosynthesis; L-phenylalanine from phenylpyruvate (PDH route): step 1/1. Functionally, catalyzes the reversible NAD(+)-dependent oxidative deamination of L-phenylalanine to phenylpyruvate. In Lysinibacillus sphaericus (Bacillus sphaericus), this protein is Phenylalanine dehydrogenase.